Here is a 122-residue protein sequence, read N- to C-terminus: Large ribosomal subunit protein uL14 (122 aa).

The protein belongs to the universal ribosomal protein uL14 family. As to quaternary structure, part of the 50S ribosomal subunit. Forms a cluster with proteins L3 and L19. In the 70S ribosome, L14 and L19 interact and together make contacts with the 16S rRNA in bridges B5 and B8.

In terms of biological role, binds to 23S rRNA. Forms part of two intersubunit bridges in the 70S ribosome. The chain is Large ribosomal subunit protein uL14 from Bacillus subtilis (strain 168).